We begin with the raw amino-acid sequence, 1537 residues long: DNA excision repair protein ERCC-6-like 2 (1537 aa).

The Helicase ATP-binding domain maps to 134 to 319; it reads YRHYIEGRGC…WCVMDWAVPG (186 aa). Residue 147–154 coordinates ATP; the sequence is DDMGLGKT. Positions 270-273 match the DEAH box motif; that stretch reads DEAH. One can recognise a Helicase C-terminal domain in the interval 510-660; it reads VLQQLLNHFR…CVVVGSENAK (151 aa). Disordered regions lie at residues 715 to 735 and 749 to 768; these read KGEPSAQELETPRDPDCQEPT and SVGHSLGKTDKHKFSDTSRT. The span at 755–764 shows a compositional bias: basic and acidic residues; it reads GKTDKHKFSD. The short motif at 772–783 is the Atypical PIP-box element; that stretch reads PAQLTLLQCGFS. 3 disordered regions span residues 791–811, 833–891, and 918–948; these read KSDQDGDGNPVPSDGSSDEQP, SEHQ…EDSD, and EDSEAENPVKVNHGDDRQNSGRGNGPVPNLL. Residues 834-857 show a composition bias toward basic and acidic residues; the sequence is EHQKSDNIQTPDEKCVSDKSEKTL. Phosphoserine occurs at positions 968 and 971. The disordered stretch occupies residues 1274 to 1306; the sequence is VHKKEERVRNKSKEKESLLKENPSNDSTLSCYD. The span at 1276–1292 shows a compositional bias: basic and acidic residues; that stretch reads KKEERVRNKSKEKESLL. Over residues 1295–1306 the composition is skewed to polar residues; the sequence is NPSNDSTLSCYD.

Belongs to the SNF2/RAD54 helicase family. In terms of assembly, interacts with NEK6. Interacts (via an atypical PIP-box) with PCNA; this interaction facilitates cenrtomeric localization of ERCC6L2. Interacts with CYREN; this interaction is DNA independent. Interacts with XRCC6 and XRCC5. Post-translationally, phosphorylated by NEK6.

The protein localises to the nucleus. The protein resides in the cytoplasm. It is found in the cytoskeleton. It localises to the microtubule organizing center. Its subcellular location is the centrosome. The protein localises to the mitochondrion. The protein resides in the chromosome. It is found in the centromere. In terms of biological role, promotes double-strand break (DSB) end-joining and facilitates programmed recombination by controlling how DNA ends are joined in a spatially oriented manner during repair. Also plays a role in DNA repair by restricting DNA end resection in double strand break (DSB) repair. Facilitates replication of complex DNA regions and regulates the maintenance of chromatin structure. In Mus musculus (Mouse), this protein is DNA excision repair protein ERCC-6-like 2.